We begin with the raw amino-acid sequence, 376 residues long: Multiphosphoryl transfer protein (376 aa).

Positions 2–142 (FQLSVQDIHP…EELRALLMGE (141 aa)) constitute a PTS EIIA type-2 domain. The Tele-phosphohistidine intermediate; for EIIA activity role is filled by histidine 62. Residue histidine 62 is modified to Phosphohistidine; by HPr. The m domain stretch occupies residues 156–284 (TLDVIASSLV…LTSDDALTDD (129 aa)). The 91-residue stretch at 285–375 (VLSAEFVVRN…DAIAAGLGEG (91 aa)) folds into the HPr domain. The Pros-phosphohistidine intermediate; for HPr activity role is filled by histidine 299. Histidine 299 is subject to Phosphohistidine; by EI.

The protein localises to the cytoplasm. In terms of biological role, the phosphoenolpyruvate-dependent sugar phosphotransferase system (sugar PTS), a major carbohydrate active transport system, catalyzes the phosphorylation of incoming sugar substrates concomitantly with their translocation across the cell membrane. The enzyme II FruAB PTS system is involved in fructose transport. This chain is Multiphosphoryl transfer protein (fruB), found in Salmonella typhimurium (strain LT2 / SGSC1412 / ATCC 700720).